We begin with the raw amino-acid sequence, 82 residues long: Small ribosomal subunit protein uS17 (82 aa).

The protein belongs to the universal ribosomal protein uS17 family. As to quaternary structure, part of the 30S ribosomal subunit.

Its function is as follows. One of the primary rRNA binding proteins, it binds specifically to the 5'-end of 16S ribosomal RNA. In Paracoccus denitrificans (strain Pd 1222), this protein is Small ribosomal subunit protein uS17.